Here is a 344-residue protein sequence, read N- to C-terminus: Dihydroorotase (344 aa).

Zn(2+)-binding residues include histidine 14 and histidine 16. Substrate is bound by residues histidine 16 to arginine 18 and asparagine 42. 3 residues coordinate Zn(2+): lysine 99, histidine 136, and histidine 174. Lysine 99 is subject to N6-carboxylysine. Residue histidine 136 coordinates substrate. Substrate is bound at residue leucine 219. Aspartate 247 serves as a coordination point for Zn(2+). The active site involves aspartate 247. Positions 251 and 263 each coordinate substrate.

The protein belongs to the metallo-dependent hydrolases superfamily. DHOase family. Class II DHOase subfamily. As to quaternary structure, homodimer. Requires Zn(2+) as cofactor.

It catalyses the reaction (S)-dihydroorotate + H2O = N-carbamoyl-L-aspartate + H(+). It participates in pyrimidine metabolism; UMP biosynthesis via de novo pathway; (S)-dihydroorotate from bicarbonate: step 3/3. In terms of biological role, catalyzes the reversible cyclization of carbamoyl aspartate to dihydroorotate. The sequence is that of Dihydroorotase from Leptothrix cholodnii (strain ATCC 51168 / LMG 8142 / SP-6) (Leptothrix discophora (strain SP-6)).